We begin with the raw amino-acid sequence, 343 residues long: Methionine import ATP-binding protein MetN (343 aa).

Positions 2–241 (IKLSNITKVF…PKTPLAQKFI (240 aa)) constitute an ABC transporter domain. 38 to 45 (GASGAGKS) lines the ATP pocket.

It belongs to the ABC transporter superfamily. Methionine importer (TC 3.A.1.24) family. As to quaternary structure, the complex is composed of two ATP-binding proteins (MetN), two transmembrane proteins (MetI) and a solute-binding protein (MetQ).

Its subcellular location is the cell inner membrane. It carries out the reaction L-methionine(out) + ATP + H2O = L-methionine(in) + ADP + phosphate + H(+). It catalyses the reaction D-methionine(out) + ATP + H2O = D-methionine(in) + ADP + phosphate + H(+). Functionally, part of the ABC transporter complex MetNIQ involved in methionine import. Responsible for energy coupling to the transport system. This chain is Methionine import ATP-binding protein MetN, found in Shigella boydii serotype 4 (strain Sb227).